The following is a 234-amino-acid chain: Large ribosomal subunit protein uL1 (234 aa).

It belongs to the universal ribosomal protein uL1 family. In terms of assembly, part of the 50S ribosomal subunit.

Binds directly to 23S rRNA. The L1 stalk is quite mobile in the ribosome, and is involved in E site tRNA release. In terms of biological role, protein L1 is also a translational repressor protein, it controls the translation of the L11 operon by binding to its mRNA. In Wolinella succinogenes (strain ATCC 29543 / DSM 1740 / CCUG 13145 / JCM 31913 / LMG 7466 / NCTC 11488 / FDC 602W) (Vibrio succinogenes), this protein is Large ribosomal subunit protein uL1.